We begin with the raw amino-acid sequence, 284 residues long: Acetylglutamate kinase (284 aa).

Substrate contacts are provided by residues 66–67, Arg88, and Asn179; that span reads GG.

Belongs to the acetylglutamate kinase family. ArgB subfamily.

The protein resides in the cytoplasm. The catalysed reaction is N-acetyl-L-glutamate + ATP = N-acetyl-L-glutamyl 5-phosphate + ADP. It participates in amino-acid biosynthesis; L-arginine biosynthesis; N(2)-acetyl-L-ornithine from L-glutamate: step 2/4. In terms of biological role, catalyzes the ATP-dependent phosphorylation of N-acetyl-L-glutamate. This chain is Acetylglutamate kinase, found in Actinobacillus pleuropneumoniae serotype 5b (strain L20).